Here is a 198-residue protein sequence, read N- to C-terminus: Shikimate kinase (198 aa).

Gly26 to Gln31 contributes to the ATP binding site. Residue Ser30 participates in Mg(2+) binding. Substrate contacts are provided by Asp48, Arg72, and Gly94. Arg132 contributes to the ATP binding site. Arg151 is a binding site for substrate. Residue Gln167 participates in ATP binding.

Belongs to the shikimate kinase family. Monomer. The cofactor is Mg(2+).

The protein resides in the cytoplasm. The catalysed reaction is shikimate + ATP = 3-phosphoshikimate + ADP + H(+). Its pathway is metabolic intermediate biosynthesis; chorismate biosynthesis; chorismate from D-erythrose 4-phosphate and phosphoenolpyruvate: step 5/7. Functionally, catalyzes the specific phosphorylation of the 3-hydroxyl group of shikimic acid using ATP as a cosubstrate. In Prochlorococcus marinus (strain NATL2A), this protein is Shikimate kinase.